An 89-amino-acid chain; its full sequence is Small ribosomal subunit protein uS15 (89 aa).

A compositionally biased stretch (basic and acidic residues) spans 1–21; the sequence is MSIAAERKAEVIKTNARKDGD. Positions 1-24 are disordered; that stretch reads MSIAAERKAEVIKTNARKDGDTGS.

It belongs to the universal ribosomal protein uS15 family. Part of the 30S ribosomal subunit. Forms a bridge to the 50S subunit in the 70S ribosome, contacting the 23S rRNA.

In terms of biological role, one of the primary rRNA binding proteins, it binds directly to 16S rRNA where it helps nucleate assembly of the platform of the 30S subunit by binding and bridging several RNA helices of the 16S rRNA. Forms an intersubunit bridge (bridge B4) with the 23S rRNA of the 50S subunit in the ribosome. The sequence is that of Small ribosomal subunit protein uS15 from Rhodopseudomonas palustris (strain BisA53).